The chain runs to 575 residues: Beta-amylase (575 aa).

The signal sequence occupies residues 1–36; that stretch reads MLHSQKRIWKKIGLCLLSFILGITVFTGSFGSKAEA. Residue Asp77 participates in substrate binding. Residues Glu84 and Asp88 each coordinate Ca(2+). 2 residues coordinate substrate: His117 and Asp125. Residues Cys119 and Cys127 are joined by a disulfide bond. Glu171 is a Ca(2+) binding site. Glu199 functions as the Proton donor in the catalytic mechanism. Residues Lys315, His320, and Thr358 each coordinate substrate. Glu395 functions as the Proton acceptor in the catalytic mechanism. Substrate contacts are provided by residues 396–397 and Arg424; that span reads NA.

The protein belongs to the glycosyl hydrolase 14 family. As to quaternary structure, monomer. Ca(2+) serves as cofactor.

The enzyme catalyses Hydrolysis of (1-&gt;4)-alpha-D-glucosidic linkages in polysaccharides so as to remove successive maltose units from the non-reducing ends of the chains.. In Niallia circulans (Bacillus circulans), this protein is Beta-amylase.